The chain runs to 340 residues: N-acetyl-gamma-glutamyl-phosphate reductase (340 aa).

Cysteine 147 is a catalytic residue.

This sequence belongs to the NAGSA dehydrogenase family. Type 1 subfamily.

It is found in the cytoplasm. It carries out the reaction N-acetyl-L-glutamate 5-semialdehyde + phosphate + NADP(+) = N-acetyl-L-glutamyl 5-phosphate + NADPH + H(+). Its pathway is amino-acid biosynthesis; L-arginine biosynthesis; N(2)-acetyl-L-ornithine from L-glutamate: step 3/4. In terms of biological role, catalyzes the NADPH-dependent reduction of N-acetyl-5-glutamyl phosphate to yield N-acetyl-L-glutamate 5-semialdehyde. The polypeptide is N-acetyl-gamma-glutamyl-phosphate reductase (Lactococcus lactis subsp. lactis (strain IL1403) (Streptococcus lactis)).